Reading from the N-terminus, the 660-residue chain is Acetyl-coenzyme A synthetase (660 aa).

CoA is bound by residues 197–200 and T317; that span reads RGGK. Residues 397 to 399, 421 to 426, D512, and R528 each bind ATP; these read GEP and DTFWQT. S536 lines the CoA pocket. R539 lines the ATP pocket. Residues V550 and V555 each coordinate Mg(2+). K625 bears the N6-acetyllysine mark.

It belongs to the ATP-dependent AMP-binding enzyme family. It depends on Mg(2+) as a cofactor. Post-translationally, acetylated. Deacetylation by the SIR2-homolog deacetylase activates the enzyme.

It carries out the reaction acetate + ATP + CoA = acetyl-CoA + AMP + diphosphate. Functionally, catalyzes the conversion of acetate into acetyl-CoA (AcCoA), an essential intermediate at the junction of anabolic and catabolic pathways. AcsA undergoes a two-step reaction. In the first half reaction, AcsA combines acetate with ATP to form acetyl-adenylate (AcAMP) intermediate. In the second half reaction, it can then transfer the acetyl group from AcAMP to the sulfhydryl group of CoA, forming the product AcCoA. In Herminiimonas arsenicoxydans, this protein is Acetyl-coenzyme A synthetase.